We begin with the raw amino-acid sequence, 424 residues long: 3-phosphoshikimate 1-carboxyvinyltransferase (424 aa).

3-phosphoshikimate is bound by residues Lys-21, Ser-22, and Arg-26. Lys-21 is a phosphoenolpyruvate binding site. 2 residues coordinate phosphoenolpyruvate: Gly-91 and Arg-119. 3-phosphoshikimate contacts are provided by Ser-164, Gln-166, Asp-310, and Lys-337. Residue Gln-166 participates in phosphoenolpyruvate binding. Asp-310 (proton acceptor) is an active-site residue. Phosphoenolpyruvate contacts are provided by Arg-341 and Arg-382.

This sequence belongs to the EPSP synthase family. As to quaternary structure, monomer.

The protein resides in the cytoplasm. It catalyses the reaction 3-phosphoshikimate + phosphoenolpyruvate = 5-O-(1-carboxyvinyl)-3-phosphoshikimate + phosphate. Its pathway is metabolic intermediate biosynthesis; chorismate biosynthesis; chorismate from D-erythrose 4-phosphate and phosphoenolpyruvate: step 6/7. Its function is as follows. Catalyzes the transfer of the enolpyruvyl moiety of phosphoenolpyruvate (PEP) to the 5-hydroxyl of shikimate-3-phosphate (S3P) to produce enolpyruvyl shikimate-3-phosphate and inorganic phosphate. This Campylobacter hominis (strain ATCC BAA-381 / DSM 21671 / CCUG 45161 / LMG 19568 / NCTC 13146 / CH001A) protein is 3-phosphoshikimate 1-carboxyvinyltransferase.